A 122-amino-acid polypeptide reads, in one-letter code: MARIAGVNIPTNKRVLIALQYIHGIGQKSAREIITKVGIEDARRVNQLTDAEVLQIRETIDRDYTVEGDLRRENSMNIKRLMDLACYRGLRHRKGLPVRGQRTHTNARTRKGPAKPIAGKKK.

Residues 95–122 (GLPVRGQRTHTNARTRKGPAKPIAGKKK) form a disordered region.

Belongs to the universal ribosomal protein uS13 family. In terms of assembly, part of the 30S ribosomal subunit. Forms a loose heterodimer with protein S19. Forms two bridges to the 50S subunit in the 70S ribosome.

In terms of biological role, located at the top of the head of the 30S subunit, it contacts several helices of the 16S rRNA. In the 70S ribosome it contacts the 23S rRNA (bridge B1a) and protein L5 of the 50S subunit (bridge B1b), connecting the 2 subunits; these bridges are implicated in subunit movement. Contacts the tRNAs in the A and P-sites. The protein is Small ribosomal subunit protein uS13 of Caulobacter vibrioides (strain ATCC 19089 / CIP 103742 / CB 15) (Caulobacter crescentus).